Consider the following 335-residue polypeptide: Probable cytosolic iron-sulfur protein assembly protein Ciao1 (335 aa).

WD repeat units lie at residues 12-51 (GHKG…WSTK), 57-96 (GHKR…FECN), 101-140 (GHEN…EFEC), 146-185 (AHTQ…SDWD), 192-231 (SHTS…NDAG), 250-289 (QHSR…KRDE), and 301-335 (AHEQ…KVDD).

It belongs to the WD repeat CIA1 family.

Its function is as follows. Essential component of the cytosolic iron-sulfur (Fe/S) protein assembly machinery. Required for the maturation of extramitochondrial Fe/S proteins. This chain is Probable cytosolic iron-sulfur protein assembly protein Ciao1, found in Drosophila pseudoobscura pseudoobscura (Fruit fly).